The sequence spans 311 residues: Probable manganese-dependent inorganic pyrophosphatase (311 aa).

6 residues coordinate Mn(2+): His9, Asp13, Asp15, Asp77, His99, and Asp151.

The protein belongs to the PPase class C family. Mn(2+) serves as cofactor.

Its subcellular location is the cytoplasm. The enzyme catalyses diphosphate + H2O = 2 phosphate + H(+). This is Probable manganese-dependent inorganic pyrophosphatase from Streptococcus equi subsp. zooepidemicus (strain H70).